Here is a 434-residue protein sequence, read N- to C-terminus: Nuclear envelope integral membrane protein 1b (434 aa).

The first 29 residues, 1-29 (MAGEVEGRGCGFSLGVLVTLLVLPLPSLC), serve as a signal peptide directing secretion. Transmembrane regions (helical) follow at residues 151–171 (PRLF…DTLS), 175–195 (LFFY…ILVF), 206–226 (PFFA…QLVF), 239–259 (YLIV…YIYG), and 280–300 (LLMY…VIAF). The a; required for its colocalization with lamins at the nuclear envelope stretch occupies residues 176–287 (FFYSTGITVG…GLLLMYVSVQ (112 aa)). The short motif at 317-325 (RKIKLKRAK) is the Nuclear localization signal element. A b; interaction with ran region spans residues 326 to 395 (PGPPRLLTEE…LTPNEVSVHE (70 aa)). The segment at 326–434 (PGPPRLLTEE…PLYPIPRSVF (109 aa)) is interaction with banf1-a and banf1-b. The BAF-binding site (BBS); essential for interaction with banf1-a, banf1-b and ran stretch occupies residues 368–375 (SRIQSPKR).

Belongs to the NEMP family. Interacts with banf1-a and banf1-b. Interacts with ran-gtp. Phosphorylated.

The protein resides in the nucleus inner membrane. It localises to the nucleus envelope. Functionally, in concert with ran, required for proper eye development. May be involved in the expression of early eye marker genes. Contributes to nuclear envelope stiffness in germ cells. Required for fertility. Essential for normal erythropoiesis. Required for efficient nuclear envelope opening and enucleation during the late stages of erythroblast maturation. The protein is Nuclear envelope integral membrane protein 1b (nemp1b) of Xenopus laevis (African clawed frog).